Reading from the N-terminus, the 558-residue chain is Solute carrier family 22 member 6-A (558 aa).

Residues 1-15 (MSFAELLERTGGMGR) are Cytoplasmic-facing. A helical transmembrane segment spans residues 16–36 (FQITQVALMCFPILLMASHNL). The Extracellular segment spans residues 37 to 140 (LQNFSAAIPD…LVCGHKNRRQ (104 aa)). Residues 141–161 (LAQSVYMGGVLVGAIILGGLS) form a helical membrane-spanning segment. At 162–167 (DRYGRR) the chain is on the cytoplasmic side. The chain crosses the membrane as a helical span at residues 168-188 (ALLIWSYFQMAVSGLCSAFSP). Residues 189-197 (NYLSYCIFR) are Extracellular-facing. Residues 198-218 (FLTGMALSGIGLNTTALIVEW) traverse the membrane as a helical segment. The Cytoplasmic segment spans residues 219-225 (VPTRVRT). A helical membrane pass occupies residues 226–246 (ITGTLAGFSYTVGQLLLAGLA). Residues 247–253 (YAMRDWR) lie on the Extracellular side of the membrane. Residues 254–274 (WLQLCVSLPFFIFFLYSWWFP) form a helical membrane-spanning segment. The Cytoplasmic portion of the chain corresponds to 275 to 342 (ESARWLVLSG…DLIRTSTIRR (68 aa)). Residues 343–363 (ISCALSLVWFSTSFAYYGLAM) traverse the membrane as a helical segment. Over 364 to 369 (DLQNFN) the chain is Extracellular. The chain crosses the membrane as a helical span at residues 370-390 (VSIYLIQVIFGAVDFPAKIFS). Residues 391 to 400 (TTAMIYVGRK) are Cytoplasmic-facing. The chain crosses the membrane as a helical span at residues 401 to 421 (FTQLMSLILGGVVILANSFVP). Over 422–428 (HEMQTVR) the chain is Extracellular. A helical membrane pass occupies residues 429–449 (TGMAVFGKGCLAASFSCVFLY). At 450–462 (TTELYPTVIRQSG) the chain is on the cytoplasmic side. The chain crosses the membrane as a helical span at residues 463 to 483 (LGLCSTMARIGGIVAPLVKIL). Residues 484–488 (GEYYP) are Extracellular-facing. A helical membrane pass occupies residues 489-509 (FLPLVIYGGAPIISGLCVFFL). The Cytoplasmic portion of the chain corresponds to 510-558 (PETVNKPLPDTIEEVEKRIKAPKKENEMNEIVSLKKKEGMKENPVNDVL). Positions 539–550 (EIVSLKKKEGMK) are enriched in basic and acidic residues. Residues 539–558 (EIVSLKKKEGMKENPVNDVL) are disordered.

It belongs to the major facilitator (TC 2.A.1) superfamily. Organic cation transporter (TC 2.A.1.19) family. Glycosylated. Glycosylation is necessary for proper targeting of the transporter to the plasma membrane.

The protein resides in the cell membrane. The protein localises to the basolateral cell membrane. It is found in the basal cell membrane. Its function is as follows. Involved in the renal elimination of endogenous and exogenous organic anions. Mediates the sodium-independent uptake of p-aminohippurate (PAH), 2,3-dimercapto-1-propanesulfonic acid (DMPS), cidofovir, adefovir, 9-(2-phosphonylmethoxyethyl) guanine (PMEG), 9-(2-phosphonylmethoxyethyl) diaminopurine (PMEDAP), ochratoxin (OTA), acyclovir (ACV), 3'-azido-3-'deoxythymidine (AZT), cimetidine (CMD), 2,4-dichloro-phenoxyacetate (2,4-D), hippurate (HA), indoleacetate (IA), indoxyl sulfate (IS) and 3-carboxy-4-methyl-5-propyl-2-furanpropionate (CMPF) and edaravone sulfate. PAH uptake is inhibited by p-chloromercuribenzenesulphonate (PCMBS), diethyl pyrocarbonate (DEPC), indomethacin, sulindac, diclofenac, carprofen, okadaic acid, benzothiazolylcysteine (BTC), S-chlorotrifluoroethylcysteine (CTFC), cysteine S-conjugates S-dichlorovinylcysteine (DCVC), furosemide, steviol, phorbol 12-myristate 13-acetate (PMA), calcium ionophore A23187, benzylpenicillin, bumetamide, losartan, probenecid, phenol red, urate, glutarate and alpha-ketoglutarate. This chain is Solute carrier family 22 member 6-A (slc22a6-a), found in Xenopus laevis (African clawed frog).